We begin with the raw amino-acid sequence, 165 residues long: Nucleotide-binding protein PMM0481 (165 aa).

Belongs to the YajQ family.

Its function is as follows. Nucleotide-binding protein. This is Nucleotide-binding protein PMM0481 from Prochlorococcus marinus subsp. pastoris (strain CCMP1986 / NIES-2087 / MED4).